The sequence spans 459 residues: MSFTFAIIGRPNVGKSTLFNRLVGQKLALVDDTPGVTRDRREGEGRLGDLEFTIIDTAGLDEGAKGSLTARMQQQTETAIELADALMFVFDARAGLTPNDRAFADFARRANKPVVLVANKSEGKAGGIGAMESYALGLGDPVQISAEHGEGLSELYDALRAIMPEPEVEDDDEEIDGLTEEDFSKRPIRVAIVGRPNAGKSTFINRLLGEDRLLTSPEAGTTRDSIAVEVNWKGREFRIFDTAGLRRRSRIEEKLEKLSVADALRAVRFAEVVVLMMDSQNRFEEQDLRIADLIEREGRALVIAVNKWDLVEQQGGQIAQLRADADHWLPQVRGVPIVATSGMLGEGVDRLIDAIQDAYAVWNTRVSTAALNRWFEQAVAQNPPPAVAGRRLKLNYVTQTKARPPSFVVFCSRADAVPESYLRYLVNSLRGVFKLPGTPVRITLREKANPFAHKRKRKS.

2 EngA-type G domains span residues 3–167 and 188–363; these read FTFA…PEPE and IRVA…AVWN. Residues 9–16, 56–60, 119–122, 194–201, 241–245, and 306–309 each bind GTP; these read GRPNVGKS, DTAGL, NKSE, GRPNAGKS, and NKWD. A KH-like domain is found at 364–448; sequence TRVSTAALNR…PVRITLREKA (85 aa).

This sequence belongs to the TRAFAC class TrmE-Era-EngA-EngB-Septin-like GTPase superfamily. EngA (Der) GTPase family. As to quaternary structure, associates with the 50S ribosomal subunit.

In terms of biological role, GTPase that plays an essential role in the late steps of ribosome biogenesis. The chain is GTPase Der from Rhodopseudomonas palustris (strain HaA2).